Here is a 433-residue protein sequence, read N- to C-terminus: Xylose isomerase (433 aa).

Active-site residues include His-99 and Asp-102. The Mg(2+) site is built by Glu-230, Glu-266, His-269, Asp-294, Asp-305, Asp-307, and Asp-337.

The protein belongs to the xylose isomerase family. Homotetramer. Mg(2+) serves as cofactor.

The protein resides in the cytoplasm. It catalyses the reaction alpha-D-xylose = alpha-D-xylulofuranose. The chain is Xylose isomerase from Cereibacter sphaeroides (strain ATCC 17023 / DSM 158 / JCM 6121 / CCUG 31486 / LMG 2827 / NBRC 12203 / NCIMB 8253 / ATH 2.4.1.) (Rhodobacter sphaeroides).